A 505-amino-acid polypeptide reads, in one-letter code: Exodeoxyribonuclease 7 large subunit (505 aa).

The tract at residues Ser466–Phe505 is disordered. The span at Ala480 to Pro497 shows a compositional bias: pro residues.

This sequence belongs to the XseA family. In terms of assembly, heterooligomer composed of large and small subunits.

It is found in the cytoplasm. It carries out the reaction Exonucleolytic cleavage in either 5'- to 3'- or 3'- to 5'-direction to yield nucleoside 5'-phosphates.. Functionally, bidirectionally degrades single-stranded DNA into large acid-insoluble oligonucleotides, which are then degraded further into small acid-soluble oligonucleotides. In Caulobacter vibrioides (strain NA1000 / CB15N) (Caulobacter crescentus), this protein is Exodeoxyribonuclease 7 large subunit.